We begin with the raw amino-acid sequence, 84 residues long: Cell division topological specificity factor (84 aa).

It belongs to the MinE family.

Functionally, prevents the cell division inhibition by proteins MinC and MinD at internal division sites while permitting inhibition at polar sites. This ensures cell division at the proper site by restricting the formation of a division septum at the midpoint of the long axis of the cell. The protein is Cell division topological specificity factor of Burkholderia cenocepacia (strain ATCC BAA-245 / DSM 16553 / LMG 16656 / NCTC 13227 / J2315 / CF5610) (Burkholderia cepacia (strain J2315)).